The chain runs to 402 residues: Prophage integrase IntZ (402 aa).

The Core-binding (CB) domain maps to 103 to 183; it reads AGFKKVAEDW…RIGEIFKFAV (81 aa). The region spanning 206–381 is the Tyr recombinase domain; it reads GHNAWIPISE…AYLKQRRAMM (176 aa). Active-site residues include arginine 244, lysine 271, histidine 332, arginine 335, and histidine 359. The active-site O-(3'-phospho-DNA)-tyrosine intermediate is tyrosine 368.

The protein belongs to the 'phage' integrase family.

In terms of biological role, integrase is necessary for integration of the phage into the host genome by site-specific recombination. In conjunction with excisionase, integrase is also necessary for excision of the prophage from the host genome. The protein is Prophage integrase IntZ (intZ) of Escherichia coli (strain K12).